The sequence spans 539 residues: Phosphoenolpyruvate carboxykinase (ATP) (539 aa).

Substrate-binding residues include R64, Y206, and K212. Residues K212, H231, and 247–255 (GLSGTGKTT) contribute to the ATP site. Mn(2+)-binding residues include K212 and H231. Residue D268 coordinates Mn(2+). Residues E296, R332, 448-449 (RI), and T454 contribute to the ATP site. R332 is a binding site for substrate.

The protein belongs to the phosphoenolpyruvate carboxykinase (ATP) family. As to quaternary structure, monomer. Mn(2+) serves as cofactor.

The protein localises to the cytoplasm. It carries out the reaction oxaloacetate + ATP = phosphoenolpyruvate + ADP + CO2. Its pathway is carbohydrate biosynthesis; gluconeogenesis. In terms of biological role, involved in the gluconeogenesis. Catalyzes the conversion of oxaloacetate (OAA) to phosphoenolpyruvate (PEP) through direct phosphoryl transfer between the nucleoside triphosphate and OAA. The sequence is that of Phosphoenolpyruvate carboxykinase (ATP) from Hamiltonella defensa subsp. Acyrthosiphon pisum (strain 5AT).